We begin with the raw amino-acid sequence, 256 residues long: Triosephosphate isomerase (256 aa).

A substrate-binding site is contributed by 9-11 (NWK). The active-site Electrophile is His97. Residue Glu169 is the Proton acceptor of the active site. Substrate-binding positions include Gly175, Ser214, and 235–236 (GG).

The protein belongs to the triosephosphate isomerase family. As to quaternary structure, homodimer.

The protein resides in the cytoplasm. It carries out the reaction D-glyceraldehyde 3-phosphate = dihydroxyacetone phosphate. It functions in the pathway carbohydrate biosynthesis; gluconeogenesis. The protein operates within carbohydrate degradation; glycolysis; D-glyceraldehyde 3-phosphate from glycerone phosphate: step 1/1. In terms of biological role, involved in the gluconeogenesis. Catalyzes stereospecifically the conversion of dihydroxyacetone phosphate (DHAP) to D-glyceraldehyde-3-phosphate (G3P). The sequence is that of Triosephosphate isomerase from Aliivibrio fischeri (strain ATCC 700601 / ES114) (Vibrio fischeri).